Here is an 836-residue protein sequence, read N- to C-terminus: Periostin (836 aa).

Residues 1–21 (MIPFLPMFSLLLLLIVNPINA) form the signal peptide. Residues 40-94 (GPNVCALQQILGTKKKYFSTCKNWYKKSICGQKTTVLYECCPGYMRMEGMKGCPA) enclose the EMI domain. 5 disulfides stabilise this stretch: C44-C80, C69-C333, C79-C92, C208-C311, and C467-C472. C60 carries the S-cysteinyl cysteine modification. FAS1 domains follow at residues 97 to 230 (PIDH…DRVL), 234 to 365 (GTSI…DQVL), 368 to 492 (DSAK…REII), and 496 to 628 (EKSL…DKLL). N599 carries an N-linked (GlcNAc...) asparagine glycan.

In terms of assembly, homodimer. Interacts with BMP1 and fibronectin. In terms of processing, gamma-carboxylation is controversial. Gamma-carboxyglutamated; gamma-carboxyglutamate residues are formed by vitamin K dependent carboxylation; this may be required for calcium binding. According to a more recent report, does not contain vitamin K-dependent gamma-carboxyglutamate residues. As to expression, widely expressed with highest levels in aorta, stomach, lower gastrointestinal tract, placenta, uterus, thyroid tissue and breast. Expressed in the kidney. Expressed in the lung. Up-regulated in epithelial ovarian tumors. Not expressed in normal ovaries. Also highly expressed at the tumor periphery of lung carcinoma tissue but not within the tumor. Overexpressed in breast cancers.

It localises to the golgi apparatus. It is found in the secreted. The protein localises to the extracellular space. Its subcellular location is the extracellular matrix. In terms of biological role, induces cell attachment and spreading and plays a role in cell adhesion. Enhances incorporation of BMP1 in the fibronectin matrix of connective tissues, and subsequent proteolytic activation of lysyl oxidase LOX. This chain is Periostin (POSTN), found in Homo sapiens (Human).